We begin with the raw amino-acid sequence, 639 residues long: Extracellular metalloproteinase 1 (639 aa).

The signal sequence occupies residues 1–19 (MHGLLLAAGLISLPLHVLA). Residues 20–250 (HPQPSSTSLA…VHNVVDYVAH (231 aa)) constitute a propeptide that is removed on maturation. Residue N291 is glycosylated (N-linked (GlcNAc...) asparagine). Residue H434 participates in Zn(2+) binding. Residue E435 is part of the active site. H438 lines the Zn(2+) pocket. N-linked (GlcNAc...) asparagine glycosylation is present at N598.

It belongs to the peptidase M36 family. The cofactor is Zn(2+).

It localises to the secreted. Its function is as follows. Secreted metalloproteinase probably acting as a virulence factor. In Arthroderma otae (strain ATCC MYA-4605 / CBS 113480) (Microsporum canis), this protein is Extracellular metalloproteinase 1 (MEP1).